Consider the following 140-residue polypeptide: Protein SNA4 (140 aa).

The Cytoplasmic portion of the chain corresponds to 1 to 8; sequence MCCYCVCC. 5 S-palmitoyl cysteine lipidation sites follow: Cys-2, Cys-3, Cys-5, Cys-7, and Cys-8. A helical transmembrane segment spans residues 9–29; that stretch reads TVSDFILYIVAFFFPPAAVLL. Residues 30–41 lie on the Vacuolar side of the membrane; it reads RSGPCSSDFLLN. Residues 42-62 traverse the membrane as a helical segment; it reads VLLTLLGFLPGMLHAFYYITI. Over 63–140 the chain is Cytoplasmic; the sequence is TSPLRNAEYV…LVESPPPYVP (78 aa). The tract at residues 84-140 is disordered; it reads RNVPSNRPQNSQTPQNRPQQGSSARNVYPSVETPLLQGAAPHDNKQSLVESPPPYVP. Over residues 85–108 the composition is skewed to polar residues; the sequence is NVPSNRPQNSQTPQNRPQQGSSAR. Lys-128 is covalently cross-linked (Glycyl lysine isopeptide (Lys-Gly) (interchain with G-Cter in ubiquitin)). Residue Ser-134 is modified to Phosphoserine.

This sequence belongs to the UPF0057 (PMP3) family.

The protein localises to the vacuole membrane. In Saccharomyces cerevisiae (strain ATCC 204508 / S288c) (Baker's yeast), this protein is Protein SNA4 (SNA4).